The chain runs to 150 residues: Arginine repressor (150 aa).

This sequence belongs to the ArgR family.

The protein localises to the cytoplasm. The protein operates within amino-acid biosynthesis; L-arginine biosynthesis [regulation]. Regulates arginine biosynthesis genes. The chain is Arginine repressor from Halothermothrix orenii (strain H 168 / OCM 544 / DSM 9562).